A 618-amino-acid polypeptide reads, in one-letter code: Chaperone protein HscA homolog (618 aa).

The protein belongs to the heat shock protein 70 family.

In terms of biological role, chaperone involved in the maturation of iron-sulfur cluster-containing proteins. Has a low intrinsic ATPase activity which is markedly stimulated by HscB. This chain is Chaperone protein HscA homolog, found in Methylibium petroleiphilum (strain ATCC BAA-1232 / LMG 22953 / PM1).